The sequence spans 321 residues: 2,3,4,5-tetrahydropyridine-2,6-dicarboxylate N-succinyltransferase (321 aa).

The Mg(2+) site is built by Asp-166 and Glu-183. Glu-199 serves as the catalytic Acyl-anhydride intermediate. Succinyl-CoA-binding positions include Arg-201, Gly-216, Ser-219, Ala-242, 257–258 (EA), Gly-265, Lys-281, and 294–297 (RRNS).

Belongs to the type 2 tetrahydrodipicolinate N-succinyltransferase family. Homotrimer.

It is found in the cytoplasm. It catalyses the reaction (S)-2,3,4,5-tetrahydrodipicolinate + succinyl-CoA + H2O = (S)-2-succinylamino-6-oxoheptanedioate + CoA. Its pathway is amino-acid biosynthesis; L-lysine biosynthesis via DAP pathway; LL-2,6-diaminopimelate from (S)-tetrahydrodipicolinate (succinylase route): step 1/3. Catalyzes the conversion of the cyclic tetrahydrodipicolinate (THDP) into the acyclic N-succinyl-L-2-amino-6-oxopimelate using succinyl-CoA. In Rothia mucilaginosa (strain DY-18) (Stomatococcus mucilaginosus), this protein is 2,3,4,5-tetrahydropyridine-2,6-dicarboxylate N-succinyltransferase.